Consider the following 173-residue polypeptide: Small ribosomal subunit protein uS5 (173 aa).

An S5 DRBM domain is found at 17–80 (LREKMIAVNR…EEARRNMVKV (64 aa)).

This sequence belongs to the universal ribosomal protein uS5 family. In terms of assembly, part of the 30S ribosomal subunit. Contacts proteins S4 and S8.

Its function is as follows. With S4 and S12 plays an important role in translational accuracy. Functionally, located at the back of the 30S subunit body where it stabilizes the conformation of the head with respect to the body. The sequence is that of Small ribosomal subunit protein uS5 from Acidovorax sp. (strain JS42).